We begin with the raw amino-acid sequence, 244 residues long: tRNA (guanine-N(7)-)-methyltransferase (244 aa).

A compositionally biased stretch (polar residues) spans methionine 1–glutamine 10. Residues methionine 1–arginine 20 are disordered. Residues glutamate 74, glutamate 99, aspartate 126, and aspartate 149 each coordinate S-adenosyl-L-methionine. The active site involves aspartate 149. Substrate-binding positions include lysine 153, aspartate 185, and threonine 222–glutamate 225.

This sequence belongs to the class I-like SAM-binding methyltransferase superfamily. TrmB family.

The catalysed reaction is guanosine(46) in tRNA + S-adenosyl-L-methionine = N(7)-methylguanosine(46) in tRNA + S-adenosyl-L-homocysteine. It functions in the pathway tRNA modification; N(7)-methylguanine-tRNA biosynthesis. Catalyzes the formation of N(7)-methylguanine at position 46 (m7G46) in tRNA. In Pseudomonas aeruginosa (strain ATCC 15692 / DSM 22644 / CIP 104116 / JCM 14847 / LMG 12228 / 1C / PRS 101 / PAO1), this protein is tRNA (guanine-N(7)-)-methyltransferase.